The sequence spans 125 residues: MSNIESIVEKLSSLTLLQAAELSKRLEEEWGVSAAAPVAVVASAAGESAAAVAEKTEFEVFLEGFDAKKKISVIKEVRAITELGLKEAKDFVESAPKSLKTGVSKDEAEELKKKLEAAGATIILR.

It belongs to the bacterial ribosomal protein bL12 family. As to quaternary structure, homodimer. Part of the ribosomal stalk of the 50S ribosomal subunit. Forms a multimeric L10(L12)X complex, where L10 forms an elongated spine to which 2 to 4 L12 dimers bind in a sequential fashion. Binds GTP-bound translation factors.

Functionally, forms part of the ribosomal stalk which helps the ribosome interact with GTP-bound translation factors. Is thus essential for accurate translation. The chain is Large ribosomal subunit protein bL12 from Liberibacter africanus (Citrus greening disease).